A 230-amino-acid polypeptide reads, in one-letter code: Small ribosomal subunit protein uS7B (230 aa).

The interval 1-22 is disordered; that stretch reads MSEEVVESSSQEASQVIPQEQE. Residues 7-16 show a composition bias toward low complexity; that stretch reads ESSSQEASQV.

It belongs to the universal ribosomal protein uS7 family.

This Drosophila melanogaster (Fruit fly) protein is Small ribosomal subunit protein uS7B (RpS5b).